Consider the following 379-residue polypeptide: Succinyl-diaminopimelate desuccinylase (379 aa).

Zn(2+) is bound at residue His-70. Asp-72 is an active-site residue. Position 103 (Asp-103) interacts with Zn(2+). Residue Glu-137 is the Proton acceptor of the active site. Positions 138, 166, and 352 each coordinate Zn(2+).

It belongs to the peptidase M20A family. DapE subfamily. In terms of assembly, homodimer. Zn(2+) is required as a cofactor. It depends on Co(2+) as a cofactor.

It carries out the reaction N-succinyl-(2S,6S)-2,6-diaminopimelate + H2O = (2S,6S)-2,6-diaminopimelate + succinate. It functions in the pathway amino-acid biosynthesis; L-lysine biosynthesis via DAP pathway; LL-2,6-diaminopimelate from (S)-tetrahydrodipicolinate (succinylase route): step 3/3. Its function is as follows. Catalyzes the hydrolysis of N-succinyl-L,L-diaminopimelic acid (SDAP), forming succinate and LL-2,6-diaminopimelate (DAP), an intermediate involved in the bacterial biosynthesis of lysine and meso-diaminopimelic acid, an essential component of bacterial cell walls. The polypeptide is Succinyl-diaminopimelate desuccinylase (Burkholderia vietnamiensis (strain G4 / LMG 22486) (Burkholderia cepacia (strain R1808))).